The chain runs to 378 residues: Erythronate-4-phosphate dehydrogenase (378 aa).

2 residues coordinate substrate: Ser-45 and Thr-66. Residues Asp-146 and Thr-175 each contribute to the NAD(+) site. The active site involves Arg-208. Asp-232 serves as a coordination point for NAD(+). Residue Glu-237 is part of the active site. His-254 serves as the catalytic Proton donor. An NAD(+)-binding site is contributed by Gly-257. Tyr-258 contributes to the substrate binding site.

It belongs to the D-isomer specific 2-hydroxyacid dehydrogenase family. PdxB subfamily. As to quaternary structure, homodimer.

The protein localises to the cytoplasm. The enzyme catalyses 4-phospho-D-erythronate + NAD(+) = (R)-3-hydroxy-2-oxo-4-phosphooxybutanoate + NADH + H(+). It functions in the pathway cofactor biosynthesis; pyridoxine 5'-phosphate biosynthesis; pyridoxine 5'-phosphate from D-erythrose 4-phosphate: step 2/5. Catalyzes the oxidation of erythronate-4-phosphate to 3-hydroxy-2-oxo-4-phosphonooxybutanoate. The protein is Erythronate-4-phosphate dehydrogenase of Escherichia fergusonii (strain ATCC 35469 / DSM 13698 / CCUG 18766 / IAM 14443 / JCM 21226 / LMG 7866 / NBRC 102419 / NCTC 12128 / CDC 0568-73).